A 104-amino-acid polypeptide reads, in one-letter code: L-rhamnose mutarotase (104 aa).

Position 18 (Y18) interacts with substrate. Residue H22 is the Proton donor of the active site. Residues Y41 and 76–77 (WW) each bind substrate.

The protein belongs to the rhamnose mutarotase family. As to quaternary structure, homodimer.

Its subcellular location is the cytoplasm. The catalysed reaction is alpha-L-rhamnose = beta-L-rhamnose. Its pathway is carbohydrate metabolism; L-rhamnose metabolism. Functionally, involved in the anomeric conversion of L-rhamnose. The polypeptide is L-rhamnose mutarotase (Lactiplantibacillus plantarum (strain ATCC BAA-793 / NCIMB 8826 / WCFS1) (Lactobacillus plantarum)).